A 262-amino-acid polypeptide reads, in one-letter code: MSEPHLLIDAGNSRIKWALADAQRTLVRTGAFGHTRDGGADPDWADLPRPRGAWISNVAGADVGARLDALLDTRWPGLPRTTIRSRPAQCGVTNGYTTPEQLGSDRWAGLIGARAAFPDEHLLIATFGTATTLEALRADGRFTGGLIAPGWALMMRALGTHTAQLPTLTTDIASGLLADAQAQPFQVDTPRSLSAGCLYAQAGLIERAWRDLAAAWQAPVRLVLAGGAADEIARALTLPHTRHDALILSGLALIAAEASAQD.

Position 9-16 (aspartate 9–lysine 16) interacts with ATP. Residues tyrosine 96 and glycine 103–arginine 106 contribute to the substrate site. Catalysis depends on aspartate 105, which acts as the Proton acceptor. Threonine 129 contacts ATP. Substrate is bound at residue threonine 189.

This sequence belongs to the type III pantothenate kinase family. As to quaternary structure, homodimer. It depends on NH4(+) as a cofactor. K(+) is required as a cofactor.

It localises to the cytoplasm. The enzyme catalyses (R)-pantothenate + ATP = (R)-4'-phosphopantothenate + ADP + H(+). Its pathway is cofactor biosynthesis; coenzyme A biosynthesis; CoA from (R)-pantothenate: step 1/5. In terms of biological role, catalyzes the phosphorylation of pantothenate (Pan), the first step in CoA biosynthesis. This chain is Type III pantothenate kinase, found in Burkholderia multivorans (strain ATCC 17616 / 249).